Reading from the N-terminus, the 350-residue chain is Small ribosomal subunit biogenesis GTPase RsgA (350 aa).

Residues 1 to 30 are disordered; the sequence is MSKRKLTQNQQRRIQSNNAKTLHRHQHRHK. Positions 7–20 are enriched in polar residues; it reads TQNQQRRIQSNNAK. The span at 21–30 shows a compositional bias: basic residues; it reads TLHRHQHRHK. In terms of domain architecture, CP-type G spans 106–274; it reads HNQIVRPDYY…LIDSPGIREF (169 aa). Residues 162–165 and 216–224 each bind GTP; these read NKAD and GQSGVGKSS. Zn(2+)-binding residues include Cys-298, Cys-303, His-305, and Cys-311.

It belongs to the TRAFAC class YlqF/YawG GTPase family. RsgA subfamily. In terms of assembly, monomer. Associates with 30S ribosomal subunit, binds 16S rRNA. Zn(2+) serves as cofactor.

Its subcellular location is the cytoplasm. One of several proteins that assist in the late maturation steps of the functional core of the 30S ribosomal subunit. Helps release RbfA from mature subunits. May play a role in the assembly of ribosomal proteins into the subunit. Circularly permuted GTPase that catalyzes slow GTP hydrolysis, GTPase activity is stimulated by the 30S ribosomal subunit. In Histophilus somni (strain 2336) (Haemophilus somnus), this protein is Small ribosomal subunit biogenesis GTPase RsgA.